The chain runs to 753 residues: 5-methyltetrahydropteroyltriglutamate--homocysteine methyltransferase (753 aa).

Residues 17–20 (RELK) and K117 each bind 5-methyltetrahydropteroyltri-L-glutamate. Residues 431 to 433 (IGS) and E484 each bind L-homocysteine. L-methionine is bound by residues 431–433 (IGS) and E484. Residues 515–516 (RC) and W561 each bind 5-methyltetrahydropteroyltri-L-glutamate. D599 is a binding site for L-homocysteine. D599 serves as a coordination point for L-methionine. 5-methyltetrahydropteroyltri-L-glutamate is bound at residue E605. The Zn(2+) site is built by H641, C643, and E665. H694 serves as the catalytic Proton donor. C726 serves as a coordination point for Zn(2+).

Belongs to the vitamin-B12 independent methionine synthase family. Zn(2+) serves as cofactor.

It carries out the reaction 5-methyltetrahydropteroyltri-L-glutamate + L-homocysteine = tetrahydropteroyltri-L-glutamate + L-methionine. It participates in amino-acid biosynthesis; L-methionine biosynthesis via de novo pathway; L-methionine from L-homocysteine (MetE route): step 1/1. Functionally, catalyzes the transfer of a methyl group from 5-methyltetrahydrofolate to homocysteine resulting in methionine formation. This Shigella flexneri protein is 5-methyltetrahydropteroyltriglutamate--homocysteine methyltransferase.